The chain runs to 85 residues: Small ribosomal subunit protein bS16 (85 aa).

This sequence belongs to the bacterial ribosomal protein bS16 family.

The chain is Small ribosomal subunit protein bS16 from Pelobacter propionicus (strain DSM 2379 / NBRC 103807 / OttBd1).